A 260-amino-acid polypeptide reads, in one-letter code: 5-oxoprolinase subunit A 2 (260 aa).

It belongs to the LamB/PxpA family. Forms a complex composed of PxpA, PxpB and PxpC.

It carries out the reaction 5-oxo-L-proline + ATP + 2 H2O = L-glutamate + ADP + phosphate + H(+). Functionally, catalyzes the cleavage of 5-oxoproline to form L-glutamate coupled to the hydrolysis of ATP to ADP and inorganic phosphate. This is 5-oxoprolinase subunit A 2 from Ralstonia nicotianae (strain ATCC BAA-1114 / GMI1000) (Ralstonia solanacearum).